The primary structure comprises 533 residues: Chromosomal replication initiator protein DnaA (533 aa).

Residues 1–72 (MNDFWQHCSA…DLARDFWNAP (72 aa)) are domain I, interacts with DnaA modulators. The segment at 72–196 (PIEVQFVLDP…EAADSMYERS (125 aa)) is domain II. The interval 83 to 110 (AGQRSPAGATPLAPRAPLPSANPAPVGP) is disordered. The segment covering 96-110 (PRAPLPSANPAPVGP) has biased composition (pro residues). Residues 197–413 (KLNPVLTFDN…GALRKILAYS (217 aa)) are domain III, AAA+ region. Residues Gly-241, Gly-243, Lys-244, and Thr-245 each contribute to the ATP site. The domain IV, binds dsDNA stretch occupies residues 414–533 (KFHGREITIE…LHVLEQTLKG (120 aa)).

It belongs to the DnaA family. Oligomerizes as a right-handed, spiral filament on DNA at oriC.

The protein localises to the cytoplasm. In terms of biological role, plays an essential role in the initiation and regulation of chromosomal replication. ATP-DnaA binds to the origin of replication (oriC) to initiate formation of the DNA replication initiation complex once per cell cycle. Binds the DnaA box (a 9 base pair repeat at the origin) and separates the double-stranded (ds)DNA. Forms a right-handed helical filament on oriC DNA; dsDNA binds to the exterior of the filament while single-stranded (ss)DNA is stabiized in the filament's interior. The ATP-DnaA-oriC complex binds and stabilizes one strand of the AT-rich DNA unwinding element (DUE), permitting loading of DNA polymerase. After initiation quickly degrades to an ADP-DnaA complex that is not apt for DNA replication. Binds acidic phospholipids. In Burkholderia mallei (strain NCTC 10247), this protein is Chromosomal replication initiator protein DnaA.